A 366-amino-acid chain; its full sequence is Succinyl-diaminopimelate desuccinylase (366 aa).

Histidine 66 is a Zn(2+) binding site. Aspartate 68 is an active-site residue. Aspartate 97 contacts Zn(2+). Catalysis depends on glutamate 127, which acts as the Proton acceptor. Residues glutamate 128, glutamate 156, and histidine 341 each contribute to the Zn(2+) site.

The protein belongs to the peptidase M20A family. DapE subfamily. In terms of assembly, homodimer. It depends on Zn(2+) as a cofactor. The cofactor is Co(2+).

The enzyme catalyses N-succinyl-(2S,6S)-2,6-diaminopimelate + H2O = (2S,6S)-2,6-diaminopimelate + succinate. It participates in amino-acid biosynthesis; L-lysine biosynthesis via DAP pathway; LL-2,6-diaminopimelate from (S)-tetrahydrodipicolinate (succinylase route): step 3/3. Catalyzes the hydrolysis of N-succinyl-L,L-diaminopimelic acid (SDAP), forming succinate and LL-2,6-diaminopimelate (DAP), an intermediate involved in the bacterial biosynthesis of lysine and meso-diaminopimelic acid, an essential component of bacterial cell walls. In Aliarcobacter butzleri (strain RM4018) (Arcobacter butzleri), this protein is Succinyl-diaminopimelate desuccinylase.